Here is a 166-residue protein sequence, read N- to C-terminus: Regulator of ribonuclease activity A (166 aa).

The protein belongs to the RraA family. Homotrimer. Binds to both RNA-binding sites in the C-terminal region of Rne and to RhlB.

It is found in the cytoplasm. Its function is as follows. Globally modulates RNA abundance by binding to RNase E (Rne) and regulating its endonucleolytic activity. Can modulate Rne action in a substrate-dependent manner by altering the composition of the degradosome. Modulates RNA-binding and helicase activities of the degradosome. In Glaesserella parasuis serovar 5 (strain SH0165) (Haemophilus parasuis), this protein is Regulator of ribonuclease activity A.